We begin with the raw amino-acid sequence, 37 residues long: Large ribosomal subunit protein bL36 (37 aa).

It belongs to the bacterial ribosomal protein bL36 family.

In Magnetococcus marinus (strain ATCC BAA-1437 / JCM 17883 / MC-1), this protein is Large ribosomal subunit protein bL36.